The chain runs to 107 residues: MANEVQDLLSPRKGGHPPAVKAGGMRISKKQEIGTLERHTKKTGFEKTSAIANVAKIQTLDALNDALEKLNYKFPATVHMAHQKPTPALEKVVPLKRIYIIQQPRKC.

Residues 1-23 (MANEVQDLLSPRKGGHPPAVKAG) form a disordered region.

Expressed in hair follicle (at protein level).

May play a role in the early stages of epithelial differentiation or in apoptosis. The polypeptide is Death-associated protein-like 1 (DAPL1) (Homo sapiens (Human)).